Consider the following 338-residue polypeptide: DNA-directed RNA polymerase subunit alpha (338 aa).

The interval 1 to 233 (MYKNWRELIK…EQLQIFINFD (233 aa)) is alpha N-terminal domain (alpha-NTD). Residues 250 to 338 (INENLYRSVE…KMIQEGKEDL (89 aa)) form an alpha C-terminal domain (alpha-CTD) region.

It belongs to the RNA polymerase alpha chain family. As to quaternary structure, homodimer. The RNAP catalytic core consists of 2 alpha, 1 beta, 1 beta' and 1 omega subunit. When a sigma factor is associated with the core the holoenzyme is formed, which can initiate transcription.

The enzyme catalyses RNA(n) + a ribonucleoside 5'-triphosphate = RNA(n+1) + diphosphate. Functionally, DNA-dependent RNA polymerase catalyzes the transcription of DNA into RNA using the four ribonucleoside triphosphates as substrates. The chain is DNA-directed RNA polymerase subunit alpha from Syntrophotalea carbinolica (strain DSM 2380 / NBRC 103641 / GraBd1) (Pelobacter carbinolicus).